The chain runs to 64 residues: Large ribosomal subunit protein uL29 (64 aa).

This sequence belongs to the universal ribosomal protein uL29 family.

In Ralstonia pickettii (strain 12J), this protein is Large ribosomal subunit protein uL29.